A 260-amino-acid polypeptide reads, in one-letter code: Putative cysteine-rich repeat secretory protein 23 (260 aa).

The N-terminal stretch at 1–31 (MSSSFVYKSLFLVPILAVVAMQLSFVQSVLS) is a signal peptide. 2 consecutive Gnk2-homologous domains span residues 38–136 (YLHH…NISY) and 142–254 (LPEQ…LYLF).

Belongs to the cysteine-rich repeat secretory protein family.

It is found in the secreted. This Arabidopsis thaliana (Mouse-ear cress) protein is Putative cysteine-rich repeat secretory protein 23 (CRRSP23).